A 239-amino-acid chain; its full sequence is 1-(5-phosphoribosyl)-5-[(5-phosphoribosylamino)methylideneamino] imidazole-4-carboxamide isomerase (239 aa).

Asp-8 acts as the Proton acceptor in catalysis. Asp-129 (proton donor) is an active-site residue.

Belongs to the HisA/HisF family.

It localises to the cytoplasm. The catalysed reaction is 1-(5-phospho-beta-D-ribosyl)-5-[(5-phospho-beta-D-ribosylamino)methylideneamino]imidazole-4-carboxamide = 5-[(5-phospho-1-deoxy-D-ribulos-1-ylimino)methylamino]-1-(5-phospho-beta-D-ribosyl)imidazole-4-carboxamide. Its pathway is amino-acid biosynthesis; L-histidine biosynthesis; L-histidine from 5-phospho-alpha-D-ribose 1-diphosphate: step 4/9. The polypeptide is 1-(5-phosphoribosyl)-5-[(5-phosphoribosylamino)methylideneamino] imidazole-4-carboxamide isomerase (Legionella pneumophila (strain Paris)).